Here is an 820-residue protein sequence, read N- to C-terminus: Serine/threonine-protein phosphatase 4 regulatory subunit 3-B (820 aa).

Residues 1-100 (MSDTRRRVKV…DEIWEKICQV (100 aa)) form the WH1 domain. Residues 682-694 (ELWFNEDDEEEGE) show a composition bias toward acidic residues. 2 disordered regions span residues 682–711 (ELWF…DFPE) and 750–820 (AANG…RLGS). The span at 701-711 (EKTKPEDDFPE) shows a compositional bias: basic and acidic residues. Polar residues-rich tracts occupy residues 750–761 (AANGANSTNSKS) and 768–790 (PATS…STKG). Acidic residues predominate over residues 798 to 809 (YPDDEDEEEEED).

It belongs to the SMEK family. In terms of assembly, serine/threonine-protein phosphatase 4 (PP4) occurs in different assemblies of the catalytic and one or more regulatory subunits.

Its function is as follows. Regulatory subunit of serine/threonine-protein phosphatase 4 (PP4). The polypeptide is Serine/threonine-protein phosphatase 4 regulatory subunit 3-B (Xenopus laevis (African clawed frog)).